A 180-amino-acid polypeptide reads, in one-letter code: UPF0397 protein SSA_0592 (180 aa).

A run of 5 helical transmembrane segments spans residues 9-29, 45-65, 72-92, 113-133, and 146-166; these read VVATGIGAALFVVIGMINIPT, LFSVIFGPIVGFLMGFIGHAI, GGLWWFWIAGSGVFGLLVGFF, LIQFGANAIAWLIGPIGDVIV, and IVAILVNSATVAVIGTVLLTA.

Belongs to the UPF0397 family.

The protein localises to the cell membrane. In Streptococcus sanguinis (strain SK36), this protein is UPF0397 protein SSA_0592.